We begin with the raw amino-acid sequence, 359 residues long: NADH-quinone oxidoreductase subunit H (359 aa).

The next 8 helical transmembrane spans lie at 19–39 (IGWF…FIAL), 94–114 (FLFV…FAVL), 127–147 (VGLF…LAAG), 175–195 (IALL…IILM), 202–222 (FLHW…IYFI), 255–275 (FAVI…IISI), 301–321 (VWGA…QMWL), and 337–357 (CWKV…IWVI).

Belongs to the complex I subunit 1 family. NDH-1 is composed of 14 different subunits. Subunits NuoA, H, J, K, L, M, N constitute the membrane sector of the complex.

Its subcellular location is the cell inner membrane. It catalyses the reaction a quinone + NADH + 5 H(+)(in) = a quinol + NAD(+) + 4 H(+)(out). Functionally, NDH-1 shuttles electrons from NADH, via FMN and iron-sulfur (Fe-S) centers, to quinones in the respiratory chain. The immediate electron acceptor for the enzyme in this species is believed to be ubiquinone. Couples the redox reaction to proton translocation (for every two electrons transferred, four hydrogen ions are translocated across the cytoplasmic membrane), and thus conserves the redox energy in a proton gradient. This subunit may bind ubiquinone. In Chlorobaculum tepidum (strain ATCC 49652 / DSM 12025 / NBRC 103806 / TLS) (Chlorobium tepidum), this protein is NADH-quinone oxidoreductase subunit H.